The sequence spans 953 residues: Translation initiation factor IF-2 (953 aa).

Residues 53-368 form a disordered region; that stretch reads AKKAVAGTSE…PVTERKFHEL (316 aa). 2 stretches are compositionally biased toward basic and acidic residues: residues 135–151 and 162–190; these read FKAE…ERRK and RNDR…RNRQ. Over residues 191-214 the composition is skewed to low complexity; the sequence is EQGNQHRNQGQSQYNQQRQSFNQG. A compositionally biased stretch (basic and acidic residues) spans 236–266; sequence RSSEERFKQAKANKEALREQNKRKEQAKLED. The segment covering 274 to 288 has biased composition (low complexity); the sequence is PKPTAKAPATPAPTA. Basic and acidic residues predominate over residues 301-318; it reads ARPDKERDNFDHEEDGPR. Residues 332–341 show a composition bias toward low complexity; the sequence is NQKNSNWNNN. In terms of domain architecture, tr-type G spans 455-622; that stretch reads ERPPVVTIMG…TVLLVAEIQE (168 aa). The interval 464–471 is G1; that stretch reads GHVDHGKT. A GTP-binding site is contributed by 464-471; sequence GHVDHGKT. The interval 489–493 is G2; sequence GITQH. Positions 510–513 are G3; that stretch reads DTPG. GTP is bound by residues 510-514 and 564-567; these read DTPGH and NKID. A G4 region spans residues 564–567; that stretch reads NKID. The interval 600-602 is G5; the sequence is SAK.

This sequence belongs to the TRAFAC class translation factor GTPase superfamily. Classic translation factor GTPase family. IF-2 subfamily.

It is found in the cytoplasm. Its function is as follows. One of the essential components for the initiation of protein synthesis. Protects formylmethionyl-tRNA from spontaneous hydrolysis and promotes its binding to the 30S ribosomal subunits. Also involved in the hydrolysis of GTP during the formation of the 70S ribosomal complex. In Streptococcus gordonii (strain Challis / ATCC 35105 / BCRC 15272 / CH1 / DL1 / V288), this protein is Translation initiation factor IF-2.